We begin with the raw amino-acid sequence, 470 residues long: Na(+)/H(+) antiporter NhaA 2 (470 aa).

The next 11 helical transmembrane spans lie at phenylalanine 34–leucine 54, leucine 85–isoleucine 105, alanine 121–leucine 141, glycine 150–glycine 170, valine 179–phenylalanine 199, serine 202–methionine 222, tryptophan 241–isoleucine 261, serine 317–alanine 337, leucine 357–leucine 377, leucine 395–leucine 415, and leucine 423–valine 443.

It belongs to the NhaA Na(+)/H(+) (TC 2.A.33) antiporter family.

The protein resides in the cell inner membrane. It carries out the reaction Na(+)(in) + 2 H(+)(out) = Na(+)(out) + 2 H(+)(in). Functionally, na(+)/H(+) antiporter that extrudes sodium in exchange for external protons. This Myxococcus xanthus (strain DK1622) protein is Na(+)/H(+) antiporter NhaA 2.